A 324-amino-acid polypeptide reads, in one-letter code: MITSNRKPTVPDFMRPVAELESQVAELKRLAPKNDKVIENKINRFQDKLTKLQKEIFSSLTPLQRLNLVRQSERPTTLDYIPNILDEWIELHGDRGGADDPALVGGIGKIDGHSIVFIGHQRGRGTKENVARNFGMPAPGGYRKALRLMKHANRFGMPILTFIDTPGAWAGLKAEELGQGEAIAVNLREMFSFEVPIICTIIGEGGSGGALGIGIGDSIIMLEYAVYTVATPEACAAILWKNSKESLAAAEALKITSHDLKVMGIVDEILTEPIGGAQADHQSASKYLRKELIKQLNILLRLNKSELKIQRYEKFRKMGAFYEI.

Residues 44–298 form the CoA carboxyltransferase C-terminal domain; the sequence is RFQDKLTKLQ…RKELIKQLNI (255 aa).

It belongs to the AccA family. As to quaternary structure, acetyl-CoA carboxylase is a heterohexamer composed of biotin carboxyl carrier protein (accB), biotin carboxylase (accC) and two subunits each of ACCase subunit alpha (accA) and ACCase subunit beta (accD).

It is found in the plastid. Its subcellular location is the chloroplast. The enzyme catalyses N(6)-carboxybiotinyl-L-lysyl-[protein] + acetyl-CoA = N(6)-biotinyl-L-lysyl-[protein] + malonyl-CoA. It functions in the pathway lipid metabolism; malonyl-CoA biosynthesis; malonyl-CoA from acetyl-CoA: step 1/1. Its function is as follows. Component of the acetyl coenzyme A carboxylase (ACC) complex. First, biotin carboxylase catalyzes the carboxylation of biotin on its carrier protein (BCCP) and then the CO(2) group is transferred by the carboxyltransferase to acetyl-CoA to form malonyl-CoA. In Porphyra purpurea (Red seaweed), this protein is Acetyl-coenzyme A carboxylase carboxyl transferase subunit alpha.